The chain runs to 293 residues: Protein bcp-1 (293 aa).

Over residues 1–12 (MGKKRSREEAQK) the composition is skewed to basic and acidic residues. The segment at 1 to 35 (MGKKRSREEAQKEVVQNDPTVDKMDEDSDSSDSDE) is disordered. Positions 24–35 (MDEDSDSSDSDE) are enriched in acidic residues.

This sequence belongs to the BCP1 family.

Its subcellular location is the cytoplasm. It localises to the nucleus. Involved in nuclear export, actin cytoskeleton organization and vesicular transport. This chain is Protein bcp-1 (bcp-1), found in Neurospora crassa (strain ATCC 24698 / 74-OR23-1A / CBS 708.71 / DSM 1257 / FGSC 987).